The sequence spans 745 residues: Ribosomal protein S6 kinase alpha-6 (745 aa).

The interval 1 to 28 (MLPFAPQDEPWDREMEVFSGGGASSGEV) is disordered. The 258-residue stretch at 73–330 (FELLKVLGQG…VEEIKRHLFF (258 aa)) folds into the Protein kinase 1 domain. ATP is bound by residues 79–87 (LGQGSFGKV) and Lys105. Asp198 serves as the catalytic Proton acceptor. Phosphoserine is present on residues Ser232, Ser372, and Ser389. The region spanning 331-400 (ANIDWDKLYK…VATSIAEEYK (70 aa)) is the AGC-kinase C-terminal domain. The region spanning 426–683 (YELKEDIGVG…AEQILKHSWI (258 aa)) is the Protein kinase 2 domain. Residues 432 to 440 (IGVGSYSVC) and Lys455 each bind ATP. Residue Asp543 is the Proton acceptor of the active site. Thr581 is subject to Phosphothreonine.

It belongs to the protein kinase superfamily. AGC Ser/Thr protein kinase family. S6 kinase subfamily. As to quaternary structure, forms a complex with MAPK3/ERK1 but not with MAPK9 or MAPK14 in serum-starved cells. Mg(2+) serves as cofactor. Phosphorylated at Ser-232, Ser-372, and Ser-389 in serum-starved cells.

It localises to the cytoplasm. Its subcellular location is the cytosol. It is found in the nucleus. The catalysed reaction is L-seryl-[protein] + ATP = O-phospho-L-seryl-[protein] + ADP + H(+). It carries out the reaction L-threonyl-[protein] + ATP = O-phospho-L-threonyl-[protein] + ADP + H(+). Constitutively activated by phosphorylation at Ser-232, Ser-372, and Ser-389 in serum-starved cells. Does not require growth factor stimulation for significant kinase activity. Its function is as follows. Constitutively active serine/threonine-protein kinase that exhibits growth-factor-independent kinase activity and that may participate in p53/TP53-dependent cell growth arrest signaling and play an inhibitory role during embryogenesis. This Homo sapiens (Human) protein is Ribosomal protein S6 kinase alpha-6 (RPS6KA6).